A 234-amino-acid polypeptide reads, in one-letter code: GTP-binding protein YPT52 (234 aa).

Residues 10-17, 66-70, and 111-114 each bind GTP; these read GDSSVGKS, DTAGQ, and NKVG. Disordered stretches follow at residues 131 to 151 and 206 to 234; these read QETP…EEQK and NRQI…SCCS. The span at 132 to 142 shows a compositional bias: polar residues; that stretch reads ETPSTETSPDS. Residues Ser-139 and Ser-142 each carry the phosphoserine modification. A Glycyl lysine isopeptide (Lys-Gly) (interchain with G-Cter in ubiquitin) cross-link involves residue Lys-151. The span at 217-234 shows a compositional bias: polar residues; the sequence is VDINLQRPSTNDPTSCCS. S-geranylgeranyl cysteine attachment occurs at residues Cys-232 and Cys-233.

It belongs to the small GTPase superfamily. Rab family. In terms of assembly, interacts with ROY1, YIF1, YIP3, YIP4 and YIP5.

The protein localises to the cell membrane. Its subcellular location is the endoplasmic reticulum. In terms of biological role, required for transport in the endocytic pathway and for correct sorting of the vacuolar hydrolases suggesting a possible intersection of the endocytic with the vacuolar sorting pathway. May be involved in recruiting the MON1-CCZ1 complex to membranes enriched in phosphatidylinositol 3-phosphate (PtdIns[3]P) or other charged lipids, leading to recruitment of YPT7. The sequence is that of GTP-binding protein YPT52 (YPT52) from Saccharomyces cerevisiae (strain ATCC 204508 / S288c) (Baker's yeast).